Consider the following 54-residue polypeptide: Photosystem II reaction center protein L (54 aa).

Residues 33–53 (SLFWGLLLIFVLAVLFSSYIF) form a helical membrane-spanning segment.

This sequence belongs to the PsbL family. As to quaternary structure, PSII is composed of 1 copy each of membrane proteins PsbA, PsbB, PsbC, PsbD, PsbE, PsbF, PsbH, PsbI, PsbJ, PsbK, PsbL, PsbM, PsbT, PsbX, PsbY, PsbZ, Psb30/Ycf12, at least 3 peripheral proteins of the oxygen-evolving complex and a large number of cofactors. It forms dimeric complexes.

The protein localises to the plastid. The protein resides in the chloroplast thylakoid membrane. Functionally, one of the components of the core complex of photosystem II (PSII). PSII is a light-driven water:plastoquinone oxidoreductase that uses light energy to abstract electrons from H(2)O, generating O(2) and a proton gradient subsequently used for ATP formation. It consists of a core antenna complex that captures photons, and an electron transfer chain that converts photonic excitation into a charge separation. This subunit is found at the monomer-monomer interface and is required for correct PSII assembly and/or dimerization. This is Photosystem II reaction center protein L from Stigeoclonium helveticum (Green alga).